We begin with the raw amino-acid sequence, 322 residues long: Short chain dehydrogenase AOL_s00215g274 (322 aa).

NAD(+)-binding positions include 47-48, 104-106, 197-201, and 230-232; these read AV, IAV, YNVSK, and VAT. The active-site Proton acceptor is the tyrosine 197.

The protein belongs to the short-chain dehydrogenases/reductases (SDR) family.

It participates in secondary metabolite biosynthesis; terpenoid biosynthesis. In terms of biological role, short chain dehydrogenase; part of the gene cluster that mediates the biosynthesis of sesquiterpenyl epoxy-cyclohexenoids (SECs) such as anthrobotrisins and arthrosporols, metabolites that possess a novel hybrid carbon skeleton consisting of a polyketide-derived epoxycyclohexenol combined with a terpenoid-derived monocyclic sesquiterpenol substructure (PKS-PTS hybrid). The SEC pathway plays an important role for fungal soil colonization via decreasing fungal nematode-capturing ability. Within the pathway, the cytochrome P450 monooxygenase AOL_s00215g274 is involved in specific regional ketone reductions at C-4 of farnesyl epoxy-quinone. The pathway begins with the biosynthesis of 6-methylsalicylic acid (6-MSA), the first precursor of the polyketide-derived epoxycyclohexenol in arthrosporols, by the polyketide synthase (PKS) AOL_s00215g283 via condensation of 1 acetate and 3 malonate units. The 6-methylsalicylic acid decarboxylase AOL_s00215g281 then catalyzes the decarboxylation of 6-methylsalicylic acid to yield m-cresol. The cytochrome P450 monooxygenase AOL_s00215g282 further oxidizes m-cresol to yield toluquinol. With the assistance of the oxidoreductase AOL_s00215g277, the polyprenyl transferase AOL_s00215g276 catalyzes the farnesylation of toluquinol to produce farnesyl hydroquinone, the hybrid precursor for biosynthesis of SECs. Farnesyl hydroquinone undergoes epoxidation and then subsequent dehydrogenation to form farnesyl epoxy-quinone, the first and simplest SEC. The cytochrome P450 monooxygenase AOL_s00215g278 and the FAD-dependent monooxygenase AOL_s00215g279 might be involved in the oxygenation of the phenol moiety, most likely in the epoxy formation. The cytochrome P450 monooxygenases AOL_s00215g274 and AOL_s00215g280 are involved in specific regional ketone reductions at respectively C-4 and C-1 of farnesyl epoxy-quinone PubMed:33823587. The polypeptide is Short chain dehydrogenase AOL_s00215g274 (Arthrobotrys oligospora (strain ATCC 24927 / CBS 115.81 / DSM 1491) (Nematode-trapping fungus)).